We begin with the raw amino-acid sequence, 125 residues long: Large ribosomal subunit protein bL12 (125 aa).

This sequence belongs to the bacterial ribosomal protein bL12 family. In terms of assembly, homodimer. Part of the ribosomal stalk of the 50S ribosomal subunit. Forms a multimeric L10(L12)X complex, where L10 forms an elongated spine to which 2 to 4 L12 dimers bind in a sequential fashion. Binds GTP-bound translation factors.

Its function is as follows. Forms part of the ribosomal stalk which helps the ribosome interact with GTP-bound translation factors. Is thus essential for accurate translation. The polypeptide is Large ribosomal subunit protein bL12 (Polaromonas naphthalenivorans (strain CJ2)).